The chain runs to 833 residues: Leucine--tRNA ligase (833 aa).

Residues 41-52 (PYPSGAGLHVGH) carry the 'HIGH' region motif. The 'KMSKS' region signature appears at 610-614 (KMSKS). ATP is bound at residue lysine 613.

This sequence belongs to the class-I aminoacyl-tRNA synthetase family.

It localises to the cytoplasm. The catalysed reaction is tRNA(Leu) + L-leucine + ATP = L-leucyl-tRNA(Leu) + AMP + diphosphate. The sequence is that of Leucine--tRNA ligase from Streptococcus pyogenes serotype M49 (strain NZ131).